Here is a 140-residue protein sequence, read N- to C-terminus: Nuclear receptor 2C2-associated protein (140 aa).

It belongs to the NR2C2AP family. As to quaternary structure, interacts with NR2C2/TR4.

It localises to the nucleus. Its function is as follows. May act as a repressor of NR2C2-mediated transactivation by suppressing the binding between NR2C2/TR4 and the TR4-response element in target genes. In Bos taurus (Bovine), this protein is Nuclear receptor 2C2-associated protein (NR2C2AP).